The sequence spans 238 residues: Sugar fermentation stimulation protein homolog (238 aa).

It belongs to the SfsA family.

The polypeptide is Sugar fermentation stimulation protein homolog (Brucella melitensis biotype 1 (strain ATCC 23456 / CCUG 17765 / NCTC 10094 / 16M)).